The primary structure comprises 78 residues: Putative membrane protein insertion efficiency factor (78 aa).

The protein belongs to the UPF0161 family.

It is found in the cell inner membrane. Its function is as follows. Could be involved in insertion of integral membrane proteins into the membrane. This Prochlorococcus marinus (strain MIT 9312) protein is Putative membrane protein insertion efficiency factor.